A 376-amino-acid chain; its full sequence is Lipoprotein p33 (376 aa).

Residues 1 to 30 form the signal peptide; that stretch reads MKIKKIKLLKALALTGAFGIVATVPVIVYS. Cys-31 carries the N-palmitoyl cysteine lipid modification. A lipid anchor (S-diacylglycerol cysteine) is attached at Cys-31. Positions 35–59 are disordered; the sequence is DNNGGTGDNNTGGGGSGTDQQQGTT. Gly residues predominate over residues 38–51; that stretch reads GGTGDNNTGGGGSG.

This sequence belongs to the p35 lipoprotein family.

The protein localises to the cell membrane. This is Lipoprotein p33 from Malacoplasma penetrans (Mycoplasma penetrans).